A 591-amino-acid chain; its full sequence is Probable translation initiation factor IF-2 (591 aa).

The 217-residue stretch at 7–223 (LRTPIVCVMG…LLGLAQKFLE (217 aa)) folds into the tr-type G domain. Residues 16 to 23 (GHVDHGKT) are G1. 16–23 (GHVDHGKT) serves as a coordination point for GTP. The segment at 41–45 (AITQH) is G2. The G3 stretch occupies residues 78-81 (DTPG). Residues 78-82 (DTPGH) and 132-135 (NKID) contribute to the GTP site. Positions 132-135 (NKID) are G4. Residues 200–202 (SAM) form a G5 region.

Belongs to the TRAFAC class translation factor GTPase superfamily. Classic translation factor GTPase family. IF-2 subfamily.

Function in general translation initiation by promoting the binding of the formylmethionine-tRNA to ribosomes. Seems to function along with eIF-2. In Methanosarcina barkeri (strain Fusaro / DSM 804), this protein is Probable translation initiation factor IF-2.